A 530-amino-acid polypeptide reads, in one-letter code: GMP synthase [glutamine-hydrolyzing] (530 aa).

The 202-residue stretch at 4-205 (RILILDYGSQ…VKDICGCEGD (202 aa)) folds into the Glutamine amidotransferase type-1 domain. Residue Cys-84 is the Nucleophile of the active site. Catalysis depends on residues His-179 and Glu-181. In terms of domain architecture, GMPS ATP-PPase spans 206–398 (WNMPDYISEA…LGLPPQMVYR (193 aa)). An ATP-binding site is contributed by 233–239 (SGGVDSL).

In terms of assembly, homodimer.

It catalyses the reaction XMP + L-glutamine + ATP + H2O = GMP + L-glutamate + AMP + diphosphate + 2 H(+). Its pathway is purine metabolism; GMP biosynthesis; GMP from XMP (L-Gln route): step 1/1. Its function is as follows. Catalyzes the synthesis of GMP from XMP. In Bordetella parapertussis (strain 12822 / ATCC BAA-587 / NCTC 13253), this protein is GMP synthase [glutamine-hydrolyzing].